A 186-amino-acid chain; its full sequence is Large ribosomal subunit protein eL15 (186 aa).

The tract at residues 163-186 (RGLTSAGKKGRGLNKKGKGAEKVR) is disordered. Over residues 170–179 (KKGRGLNKKG) the composition is skewed to basic residues.

This sequence belongs to the eukaryotic ribosomal protein eL15 family.

This is Large ribosomal subunit protein eL15 from Methanosphaera stadtmanae (strain ATCC 43021 / DSM 3091 / JCM 11832 / MCB-3).